The following is a 337-amino-acid chain: tRNA N6-adenosine threonylcarbamoyltransferase (337 aa).

Fe cation-binding residues include histidine 111 and histidine 115. Residues 134–138, aspartate 167, glycine 180, and asparagine 272 each bind substrate; that span reads LVSGG. Residue aspartate 300 participates in Fe cation binding.

It belongs to the KAE1 / TsaD family. The cofactor is Fe(2+).

Its subcellular location is the cytoplasm. The catalysed reaction is L-threonylcarbamoyladenylate + adenosine(37) in tRNA = N(6)-L-threonylcarbamoyladenosine(37) in tRNA + AMP + H(+). Its function is as follows. Required for the formation of a threonylcarbamoyl group on adenosine at position 37 (t(6)A37) in tRNAs that read codons beginning with adenine. Is involved in the transfer of the threonylcarbamoyl moiety of threonylcarbamoyl-AMP (TC-AMP) to the N6 group of A37, together with TsaE and TsaB. TsaD likely plays a direct catalytic role in this reaction. The protein is tRNA N6-adenosine threonylcarbamoyltransferase of Escherichia coli O45:K1 (strain S88 / ExPEC).